Consider the following 758-residue polypeptide: Probable C-mannosyltransferase DPY19L2 (758 aa).

A disordered region spans residues 1-58 (MRKQGVSSKRLQSSGRSQSKGRRGASLAREPEVEEEMEKSALGGGKLPRGSWRSSPGR). Over 1–107 (MRKQGVSSKR…ELQARRFSSR (107 aa)) the chain is Nuclear. The span at 7 to 18 (SSKRLQSSGRSQ) shows a compositional bias: low complexity. The chain crosses the membrane as a helical span at residues 108 to 128 (TTLGIAVFVAILHWLHLVTLF). Topologically, residues 129-194 (ENDRHFSHLS…INAIKRFHLY (66 aa)) are perinuclear space. A helical transmembrane segment spans residues 195 to 215 (PEVIIASWYCTFMGIMNLFGL). Residues 216 to 241 (ETKTCWNVTRIEPLNEVQSCEGLGDP) lie on the Nuclear side of the membrane. A run of 2 helical transmembrane segments spans residues 242-262 (ACFY…LFFM) and 263-283 (YGAY…CFFF). The Nuclear portion of the chain corresponds to 284-296 (NHGEATRVMWTPP). A helical transmembrane segment spans residues 297–317 (LRESFSYPFLVLQMCILTLIL). Residues 318–343 (RTSSNDRRPFIALCLSNVAFMLPWQF) are Perinuclear space-facing. The helical transmembrane segment at 344–364 (AQFILFTQIASLFPMYVVGYI) threads the bilayer. Residues 365-371 (EPSKFQK) are Nuclear-facing. A helical transmembrane segment spans residues 372–392 (IIYMNMISVTLSFILMFGNSM). At 393 to 422 (YLSSYYSSSLLMTWAIILKRNEIQKLGVSK) the chain is on the perinuclear space side. A helical transmembrane segment spans residues 423 to 443 (LNFWLIQGSAWWCGTIILKFL). Residues 444–488 (TSKILGVSDHIRLSDLIAARILRYTDFDTLIYTCAPEFDFMEKAT) lie on the Nuclear side of the membrane. Residues 489-509 (PLRYTKTLLLPVVMVITCFIF) form a helical membrane-spanning segment. Residues 510-533 (KKTVRDISYVLATNIYLRKQLLEH) are Perinuclear space-facing. The helical transmembrane segment at 534 to 554 (SELAFHTLQLLVFTALAILIM) threads the bilayer. The Nuclear segment spans residues 555–758 (RLKMFLTPHM…NSVYRVLKVN (204 aa)).

This sequence belongs to the dpy-19 family. As to quaternary structure, interacts with FAM209. As to expression, widely expressed with high expression in testis. Not detectable in ejaculated sperm (at protein level).

The protein resides in the nucleus inner membrane. Functionally, probable C-mannosyltransferase that mediates C-mannosylation of tryptophan residues on target proteins. Required during spermatogenesis for sperm head elongation and acrosome formation. Also plays a role in acrosome attachment to the nuclear envelope. The sequence is that of Probable C-mannosyltransferase DPY19L2 from Homo sapiens (Human).